Reading from the N-terminus, the 535-residue chain is MHLKSLLLAALPLLLEASPTIKGEDTASLAINTSSGIFAPYFDRQQPNVASFLDIPYAETPIGNLRFAPPVEKKNAGDDIVHTTKLPAGCIQYLPALLRGTINDGPITAGTFQRGDYANTTEDCLKISLFAPEKSVRAKEGKKTQALPVIVWIHGGGYSVGGTNVPYQLAQNWVQRTQKHIVVQVQYRLNLLGFPNAEGLAREGNNLNLGLLDQRLAVEWVRNNIARFGGDPDRITLWGESAGGYAVDGYLFTWAQDPIIKGVIADSGNALALEGVVGDSRNHTGFSLAAKSMGCGGLLPKDELECMRHVPERNLKEYLQAEVGQGGAADDGLTVSVIADNITVFSNYTERISGNSAKYPANIPVLIGTNTNEGAAVVPYKFPGFETATELPDQLKPLADGFGLNLQCTTLKETRLRAEAGATTYQYLYAGNFTNISPLPWLGAYHTAELPLVFGTYETEGPSTKFERRMSERMQDLYLEFASDPSHGLEKSGWPRAESQPERSKLVKLAADNKVEQVFSAKKLVDECVQNGFAV.

Positions 1 to 17 are cleaved as a signal peptide; sequence MHLKSLLLAALPLLLEA. N-linked (GlcNAc...) asparagine glycosylation is found at N32 and N119. The Acyl-ester intermediate role is filled by S241. Residues N282, N341, N347, and N432 are each glycosylated (N-linked (GlcNAc...) asparagine).

This sequence belongs to the type-B carboxylesterase/lipase family.

Its subcellular location is the secreted. The catalysed reaction is a carboxylic ester + H2O = an alcohol + a carboxylate + H(+). Its function is as follows. Secreted lipase involved in plant virulence. Has a substrate preference for p-nitrophenyl esters with a carbon chain length of C8 (p-nitrophenyl caprylate). This is Secreted lipase 5 from Gibberella zeae (strain ATCC MYA-4620 / CBS 123657 / FGSC 9075 / NRRL 31084 / PH-1) (Wheat head blight fungus).